The primary structure comprises 133 residues: MAKEYSRTSRVSQQVQKELARILQQEVKDPRIGMVTISGVDVTRDLAYAKVFVTFLTVGDQTNDESLEGLNAAAGYIRRLLGKAMRLRIVPEVRFCFDSTLTEGLRISELVSGAVKADKTKLAASGRTEEDED.

Belongs to the RbfA family. In terms of assembly, monomer. Binds 30S ribosomal subunits, but not 50S ribosomal subunits or 70S ribosomes.

The protein resides in the cytoplasm. In terms of biological role, one of several proteins that assist in the late maturation steps of the functional core of the 30S ribosomal subunit. Associates with free 30S ribosomal subunits (but not with 30S subunits that are part of 70S ribosomes or polysomes). Required for efficient processing of 16S rRNA. May interact with the 5'-terminal helix region of 16S rRNA. The chain is Ribosome-binding factor A from Psychromonas ingrahamii (strain DSM 17664 / CCUG 51855 / 37).